The sequence spans 318 residues: Trans-prenyltransferase (318 aa).

A helical transmembrane segment spans residues 1-21 (MLHLIYISIIVVLIIILISYT). Positions 85, 88, and 122 each coordinate isopentenyl diphosphate. Residues Asp129 and Asp135 each coordinate Mg(2+). Arg140 lines the dimethylallyl diphosphate pocket. Position 141 (Arg141) interacts with isopentenyl diphosphate. Dimethylallyl diphosphate contacts are provided by Lys216, Thr217, and Gln254.

Belongs to the FPP/GGPP synthase family. Asfivirus trans-prenyltransferase subfamily. The cofactor is Mg(2+).

The protein localises to the host endoplasmic reticulum. It localises to the host membrane. The catalysed reaction is isopentenyl diphosphate + dimethylallyl diphosphate = (2E)-geranyl diphosphate + diphosphate. The enzyme catalyses isopentenyl diphosphate + (2E)-geranyl diphosphate = (2E,6E)-farnesyl diphosphate + diphosphate. It carries out the reaction isopentenyl diphosphate + (2E,6E)-farnesyl diphosphate = (2E,6E,10E)-geranylgeranyl diphosphate + diphosphate. It catalyses the reaction isopentenyl diphosphate + (2E,6E,10E)-geranylgeranyl diphosphate = (2E,6E,10E,14E)-geranylfarnesyl diphosphate + diphosphate. It participates in isoprenoid biosynthesis; farnesyl diphosphate biosynthesis; farnesyl diphosphate from geranyl diphosphate and isopentenyl diphosphate: step 1/1. Its pathway is isoprenoid biosynthesis; geranyl diphosphate biosynthesis; geranyl diphosphate from dimethylallyl diphosphate and isopentenyl diphosphate: step 1/1. The protein operates within isoprenoid biosynthesis; geranylgeranyl diphosphate biosynthesis; geranylgeranyl diphosphate from farnesyl diphosphate and isopentenyl diphosphate: step 1/1. Functionally, trans-prenyltransferase that catalyzes the sequential condensation of isopentenyl diphosphate (IPP) with different allylic diphosphates, such as dimethylallyl diphosphate (DMAPP), geranyl diphosphate (GPP), farnesyl diphosphate (FPP) and geranylgeranyl diphosphate (GGPP), farnesyl diphosphate being the best allylic substrate. This is Trans-prenyltransferase from African swine fever virus (isolate Tick/South Africa/Pretoriuskop Pr4/1996) (ASFV).